Here is a 190-residue protein sequence, read N- to C-terminus: HTH-type transcriptional repressor AcnR (190 aa).

An HTH tetR-type domain is found at serine 10 to methionine 70. A DNA-binding region (H-T-H motif) is located at residues threonine 33–phenylalanine 52. Residues leucine 79–valine 80, arginine 130, and asparagine 134 contribute to the citrate site. Position 181 (glutamate 181) interacts with Mg(2+). Arginine 185 provides a ligand contact to citrate.

Homodimer.

Functionally, acnR negatively controls the expression of the aconitase gene acn. The protein is HTH-type transcriptional repressor AcnR of Corynebacterium diphtheriae (strain ATCC 700971 / NCTC 13129 / Biotype gravis).